We begin with the raw amino-acid sequence, 276 residues long: Large ribosomal subunit protein uL2 (276 aa).

Positions 203–276 (NVSSGKAGRT…SDKFIVKRRK (74 aa)) are disordered. The span at 210–220 (GRTRWLGRRPQ) shows a compositional bias: basic residues. The segment covering 265–276 (KPSDKFIVKRRK) has biased composition (basic and acidic residues).

This sequence belongs to the universal ribosomal protein uL2 family. In terms of assembly, part of the 50S ribosomal subunit. Forms a bridge to the 30S subunit in the 70S ribosome.

One of the primary rRNA binding proteins. Required for association of the 30S and 50S subunits to form the 70S ribosome, for tRNA binding and peptide bond formation. It has been suggested to have peptidyltransferase activity; this is somewhat controversial. Makes several contacts with the 16S rRNA in the 70S ribosome. The chain is Large ribosomal subunit protein uL2 from Coprothermobacter proteolyticus (strain ATCC 35245 / DSM 5265 / OCM 4 / BT).